The primary structure comprises 340 residues: GTP 3',8-cyclase (340 aa).

Residues 20-246 (RFERQYVYLR…PKALSDGPAK (227 aa)) enclose the Radical SAM core domain. A GTP-binding site is contributed by R29. [4Fe-4S] cluster-binding residues include C36 and C40. Y42 contacts S-adenosyl-L-methionine. Residue C43 coordinates [4Fe-4S] cluster. R79 is a GTP binding site. G83 contacts S-adenosyl-L-methionine. Position 110 (T110) interacts with GTP. Residue S134 coordinates S-adenosyl-L-methionine. A GTP-binding site is contributed by K171. M205 contributes to the S-adenosyl-L-methionine binding site. [4Fe-4S] cluster is bound by residues C268 and C271. A GTP-binding site is contributed by 273–275 (RLR). C285 contacts [4Fe-4S] cluster.

Belongs to the radical SAM superfamily. MoaA family. In terms of assembly, monomer and homodimer. Requires [4Fe-4S] cluster as cofactor.

The catalysed reaction is GTP + AH2 + S-adenosyl-L-methionine = (8S)-3',8-cyclo-7,8-dihydroguanosine 5'-triphosphate + 5'-deoxyadenosine + L-methionine + A + H(+). The protein operates within cofactor biosynthesis; molybdopterin biosynthesis. Catalyzes the cyclization of GTP to (8S)-3',8-cyclo-7,8-dihydroguanosine 5'-triphosphate. The polypeptide is GTP 3',8-cyclase (Actinobacillus pleuropneumoniae serotype 7 (strain AP76)).